Here is a 466-residue protein sequence, read N- to C-terminus: Argininosuccinate lyase (466 aa).

This sequence belongs to the lyase 1 family. Argininosuccinate lyase subfamily.

It is found in the cytoplasm. The catalysed reaction is 2-(N(omega)-L-arginino)succinate = fumarate + L-arginine. It functions in the pathway amino-acid biosynthesis; L-arginine biosynthesis; L-arginine from L-ornithine and carbamoyl phosphate: step 3/3. This is Argininosuccinate lyase from Methylocella silvestris (strain DSM 15510 / CIP 108128 / LMG 27833 / NCIMB 13906 / BL2).